Consider the following 353-residue polypeptide: Ribosome biogenesis protein BRX1 homolog (353 aa).

The interval 1-50 (MAATKRKRRGGLEVQAKKPKRSSKDAGQPAKQADVAKEAEEENRDRIPGP) is disordered. Residues 34 to 47 (DVAKEAEEENRDRI) show a composition bias toward basic and acidic residues. The region spanning 60–249 (ERILIFSSRG…LIKIFQGSFG (190 aa)) is the Brix domain. Residue Lys-160 forms a Glycyl lysine isopeptide (Lys-Gly) (interchain with G-Cter in SUMO2) linkage. Ser-261 is subject to Phosphoserine. Lys-276 is subject to N6-acetyllysine. Glycyl lysine isopeptide (Lys-Gly) (interchain with G-Cter in SUMO2) cross-links involve residues Lys-314 and Lys-322. Basic residues predominate over residues 334–344 (RRIYKRHRKLQ). The interval 334–353 (RRIYKRHRKLQQKMSRGSAK) is disordered.

This sequence belongs to the BRX1 family.

It is found in the nucleus. The protein localises to the nucleolus. In terms of biological role, required for biogenesis of the 60S ribosomal subunit. The sequence is that of Ribosome biogenesis protein BRX1 homolog (Brix1) from Mus musculus (Mouse).